A 261-amino-acid chain; its full sequence is Sulfur carrier protein FdhD (261 aa).

Cysteine 105 acts as the Cysteine persulfide intermediate in catalysis. Residue 245–250 (FIRGDR) participates in Mo-bis(molybdopterin guanine dinucleotide) binding.

Belongs to the FdhD family.

It is found in the cytoplasm. Required for formate dehydrogenase (FDH) activity. Acts as a sulfur carrier protein that transfers sulfur from IscS to the molybdenum cofactor prior to its insertion into FDH. The protein is Sulfur carrier protein FdhD of Listeria monocytogenes serovar 1/2a (strain ATCC BAA-679 / EGD-e).